The sequence spans 219 residues: Ribose-5-phosphate isomerase A (219 aa).

Substrate-binding positions include 28-31 (SGST), 81-84 (DGAD), and 94-97 (KGGG). Glu103 serves as the catalytic Proton acceptor. Lys121 serves as a coordination point for substrate.

This sequence belongs to the ribose 5-phosphate isomerase family. In terms of assembly, homodimer.

The enzyme catalyses aldehydo-D-ribose 5-phosphate = D-ribulose 5-phosphate. Its pathway is carbohydrate degradation; pentose phosphate pathway; D-ribose 5-phosphate from D-ribulose 5-phosphate (non-oxidative stage): step 1/1. Its function is as follows. Catalyzes the reversible conversion of ribose-5-phosphate to ribulose 5-phosphate. This is Ribose-5-phosphate isomerase A from Actinobacillus pleuropneumoniae serotype 3 (strain JL03).